Here is a 1323-residue protein sequence, read N- to C-terminus: ABC transporter gloK (1323 aa).

7 consecutive transmembrane segments (helical) span residues 6–26 (AIAS…TLEA), 102–122 (PHAL…AGIL), 138–158 (VAYG…VMST), 217–237 (IWAS…RLGV), 240–260 (VAAV…VFGF), 325–345 (LLVG…VFAF), and 359–379 (PLLA…GQAV). Residues 142 to 380 (LIAAYAIVYI…IFSLLGQAVS (239 aa)) form the ABC transmembrane type-1 1 domain. In terms of domain architecture, ABC transporter 1 spans 471–697 (IRDCSACWSK…SSYLESLGTR (227 aa)). 503–510 (GPIGSGKS) serves as a coordination point for ATP. A run of 7 helical transmembrane segments spans residues 748–768 (GWVT…GLVF), 795–815 (YALW…WLMI), 821–841 (AAIQ…LVYF), 859–879 (LIDM…LSCI), 891–910 (YVAA…QLFY), 976–996 (LNLT…SIAL), and 1006–1026 (IGVA…LVYT). Residues 752–1031 (WWVFVLLCSG…TLVYTWTSLE (280 aa)) form the ABC transmembrane type-1 2 domain. Positions 1069–1300 (IRFQSVSAAY…PSFFASLLKA (232 aa)) constitute an ABC transporter 2 domain. ATP is bound at residue 1103 to 1110 (GRTGSGKS).

This sequence belongs to the ABC transporter superfamily. ABCC family. Conjugate transporter (TC 3.A.1.208) subfamily.

The protein localises to the cell membrane. 3-isopropylmalate dehydratase large subunit; part of the gene cluster that mediates the biosynthesis of pneumocandins, lipohexapeptides of the echinocandin family that prevent fungal cell wall formation by non-competitive inhibition of beta-1,3-glucan synthase. Possibly secretes antifungal pneumocandins, thus avoiding of intracellular accumulation and ameliorating the toxicity to the producing cells. The chain is ABC transporter gloK from Glarea lozoyensis (strain ATCC 20868 / MF5171).